Reading from the N-terminus, the 199-residue chain is ATP-dependent Clp protease proteolytic subunit 2 (199 aa).

The active-site Nucleophile is Ser-98. His-123 is an active-site residue.

The protein belongs to the peptidase S14 family. Fourteen ClpP subunits assemble into 2 heptameric rings which stack back to back to give a disk-like structure with a central cavity, resembling the structure of eukaryotic proteasomes.

The protein resides in the cytoplasm. It catalyses the reaction Hydrolysis of proteins to small peptides in the presence of ATP and magnesium. alpha-casein is the usual test substrate. In the absence of ATP, only oligopeptides shorter than five residues are hydrolyzed (such as succinyl-Leu-Tyr-|-NHMec, and Leu-Tyr-Leu-|-Tyr-Trp, in which cleavage of the -Tyr-|-Leu- and -Tyr-|-Trp bonds also occurs).. Functionally, cleaves peptides in various proteins in a process that requires ATP hydrolysis. Has a chymotrypsin-like activity. Plays a major role in the degradation of misfolded proteins. In Corynebacterium efficiens (strain DSM 44549 / YS-314 / AJ 12310 / JCM 11189 / NBRC 100395), this protein is ATP-dependent Clp protease proteolytic subunit 2.